A 419-amino-acid chain; its full sequence is Serine--tRNA ligase (419 aa).

225–227 (TAE) contributes to the L-serine binding site. 256-258 (RKE) provides a ligand contact to ATP. Glu-279 serves as a coordination point for L-serine. 343–346 (EISS) is a binding site for ATP. An L-serine-binding site is contributed by Ser-378.

This sequence belongs to the class-II aminoacyl-tRNA synthetase family. Type-1 seryl-tRNA synthetase subfamily. In terms of assembly, homodimer. The tRNA molecule binds across the dimer.

It is found in the cytoplasm. The enzyme catalyses tRNA(Ser) + L-serine + ATP = L-seryl-tRNA(Ser) + AMP + diphosphate + H(+). It carries out the reaction tRNA(Sec) + L-serine + ATP = L-seryl-tRNA(Sec) + AMP + diphosphate + H(+). The protein operates within aminoacyl-tRNA biosynthesis; selenocysteinyl-tRNA(Sec) biosynthesis; L-seryl-tRNA(Sec) from L-serine and tRNA(Sec): step 1/1. Functionally, catalyzes the attachment of serine to tRNA(Ser). Is also able to aminoacylate tRNA(Sec) with serine, to form the misacylated tRNA L-seryl-tRNA(Sec), which will be further converted into selenocysteinyl-tRNA(Sec). The sequence is that of Serine--tRNA ligase from Pelagibacter ubique (strain HTCC1062).